The primary structure comprises 274 residues: MDSWEDFLVEDPAKPAEFDFPLGKDSQSSSKPKKRFDDEEDEDEEENKESLQNDSHSVSQKSSSSSQNDQGSNKMTRIQQKIQERNFEKAIKASEAAAKEESLESSKEAMRQAEIDSDLANAMDLFDIVDKNSASANRSKQADQRQLKTKADYAAFQADILKKVKNCQTTAEYNNFVQDLIPLLLTGLNATNLKAVQKSVNKLVVNKEQQEKTQSKRGAAAPAAKPVSTAAPSKKGGKPTVNVNSKKTVADKSAYEDYIEDEYDDYADDFDDFM.

Disordered stretches follow at residues 1-110 (MDSW…KEAM) and 207-245 (KEQQ…NVNS). A compositionally biased stretch (acidic residues) spans 38–47 (DEEDEDEEEN). Residues 52 to 73 (QNDSHSVSQKSSSSSQNDQGSN) are compositionally biased toward low complexity. The segment covering 82 to 110 (IQERNFEKAIKASEAAAKEESLESSKEAM) has biased composition (basic and acidic residues). The segment covering 219–234 (AAAPAAKPVSTAAPSK) has biased composition (low complexity).

Belongs to the eIF-3 subunit J family. As to quaternary structure, component of the eukaryotic translation initiation factor 3 (eIF-3) complex. The eIF-3 complex appears to include tif32/eif3a, SPAC25G10.08/eif3b, tif33/eif3c, SPBC4C3.07/eif3f, tif35/eif3g and sum1/eif3i. This set of common subunits may also associate exclusively with either moe1/eif3d and int6/eif3e, or with SPAC821.05/eif3h and SPAC1751.03/eif3m. The eIF-3 complex may also include SPAC3A12.13c/eif3j. Interacts with sad1.

The protein localises to the cytoplasm. In terms of biological role, component of the eukaryotic translation initiation factor 3 (eIF-3) complex, which is involved in protein synthesis of a specialized repertoire of mRNAs and, together with other initiation factors, stimulates binding of mRNA and methionyl-tRNAi to the 40S ribosome. The eIF-3 complex specifically targets and initiates translation of a subset of mRNAs involved in cell proliferation. The protein is Probable eukaryotic translation initiation factor 3 subunit J of Schizosaccharomyces pombe (strain 972 / ATCC 24843) (Fission yeast).